The chain runs to 171 residues: Large ribosomal subunit protein uL15 (171 aa).

The segment covering 1–10 (MKLNEISDNN) has biased composition (polar residues). Disordered regions lie at residues 1–44 (MKLN…RSGV) and 150–171 (LPEA…NKAK). The segment covering 21-35 (RGIGSGKGKTAGRGQ) has biased composition (gly residues). A compositionally biased stretch (basic and acidic residues) spans 157–171 (EQEKKAARREANKAK).

This sequence belongs to the universal ribosomal protein uL15 family. Part of the 50S ribosomal subunit.

Its function is as follows. Binds to the 23S rRNA. This is Large ribosomal subunit protein uL15 from Novosphingobium aromaticivorans (strain ATCC 700278 / DSM 12444 / CCUG 56034 / CIP 105152 / NBRC 16084 / F199).